The following is a 146-amino-acid chain: 3-hydroxyacyl-[acyl-carrier-protein] dehydratase FabZ (146 aa).

The active site involves H46.

The protein belongs to the thioester dehydratase family. FabZ subfamily.

It is found in the cytoplasm. It carries out the reaction a (3R)-hydroxyacyl-[ACP] = a (2E)-enoyl-[ACP] + H2O. Functionally, involved in unsaturated fatty acids biosynthesis. Catalyzes the dehydration of short chain beta-hydroxyacyl-ACPs and long chain saturated and unsaturated beta-hydroxyacyl-ACPs. This Acinetobacter baumannii (strain ATCC 17978 / DSM 105126 / CIP 53.77 / LMG 1025 / NCDC KC755 / 5377) protein is 3-hydroxyacyl-[acyl-carrier-protein] dehydratase FabZ.